The sequence spans 133 residues: Glutaredoxin-C4, chloroplastic (133 aa).

Low complexity predominate over residues 1–13; it reads MGMAQSSSSSSRP. A disordered region spans residues 1 to 25; that stretch reads MGMAQSSSSSSRPSDSEQLEEPSKP. A chloroplast-targeting transit peptide spans 1–27; the sequence is MGMAQSSSSSSRPSDSEQLEEPSKPVM. Positions 29–129 constitute a Glutaredoxin domain; that stretch reads LDKAKEIVAS…PLLTEAGAIA (101 aa). A disulfide bridge links C49 with C52.

Belongs to the glutaredoxin family. CPYC subfamily.

The protein resides in the plastid. It is found in the chloroplast. Functionally, has a glutathione-disulfide oxidoreductase activity in the presence of NADPH and glutathione reductase. Reduces low molecular weight disulfides and proteins. The sequence is that of Glutaredoxin-C4, chloroplastic (GRXC4) from Oryza sativa subsp. japonica (Rice).